Here is an 873-residue protein sequence, read N- to C-terminus: DNA mismatch repair protein MutS (873 aa).

Positions 1 to 34 (MAAIPTPRLHRGVTHLSRQTKSRARHPMSTPQHT) are disordered. A compositionally biased stretch (basic residues) spans 8–26 (RLHRGVTHLSRQTKSRARH). An ATP-binding site is contributed by 635 to 642 (GPNMGGKS).

Belongs to the DNA mismatch repair MutS family.

Functionally, this protein is involved in the repair of mismatches in DNA. It is possible that it carries out the mismatch recognition step. This protein has a weak ATPase activity. This is DNA mismatch repair protein MutS from Chromobacterium violaceum (strain ATCC 12472 / DSM 30191 / JCM 1249 / CCUG 213 / NBRC 12614 / NCIMB 9131 / NCTC 9757 / MK).